We begin with the raw amino-acid sequence, 653 residues long: Probable sulfate transporter 3.4 (653 aa).

The Cytoplasmic segment spans residues 1–92; the sequence is MGHGTNRVED…QYDLKLLRSD (92 aa). The chain crosses the membrane as a helical span at residues 93-113; it reads VISGLTIASLAIPQGISYAKL. Over 114 to 115 the chain is Extracellular; sequence AN. Residues 116 to 136 form a helical membrane-spanning segment; the sequence is LPPIVGLYSSFVPPLIYAVLG. Over 137–140 the chain is Cytoplasmic; it reads SSRH. The chain crosses the membrane as a helical span at residues 141–161; the sequence is LAVGPVSIASLVMGSMLSESV. The Extracellular segment spans residues 162–167; it reads SPTQDS. Residues 168–188 traverse the membrane as a helical segment; that stretch reads ILYLKLAFTSTFFAGVFQASL. Residues 189–194 lie on the Cytoplasmic side of the membrane; it reads GLLRLG. A helical transmembrane segment spans residues 195-215; it reads FMIDFLSKATLIGFTAGAAVI. The Extracellular segment spans residues 216–247; sequence VSLQQLKGLLGIVHFTGKMQIVPVMSSVFNHR. Residues 248-268 form a helical membrane-spanning segment; it reads SEWSWETIVMGIGFLSILLTT. Topologically, residues 269-279 are cytoplasmic; it reads RHISMRKPKLF. A helical membrane pass occupies residues 280–300; the sequence is WISAASPLASVIISTLLVYLI. Residues 301 to 331 lie on the Extracellular side of the membrane; sequence RSKTHAISFIGHLPKGLNPPSLNMLYFSGAH. A helical membrane pass occupies residues 332 to 352; sequence LALAIKTGIITGILSLTEGIA. The Cytoplasmic segment spans residues 353–370; sequence VGRTFASLKNYQVNGNKE. Residues 371–391 form a helical membrane-spanning segment; it reads MMAIGFMNMAGSCTSCYVTTG. The Extracellular portion of the chain corresponds to 392 to 407; sequence SFSRSAVNYNAGAKTA. The helical transmembrane segment at 408–428 threads the bilayer; it reads VSNIVMASAVLVTLLFLMPLF. The Cytoplasmic portion of the chain corresponds to 429–433; the sequence is YYTPN. Residues 434-454 traverse the membrane as a helical segment; it reads VILAAIILTAVIGLIDYQAAY. Over 455–471 the chain is Extracellular; that stretch reads KLWKVDKFDFFTCLCSF. A helical transmembrane segment spans residues 472 to 492; it reads FGVLFVSVPLGLAIAVAVSVI. Residues 493–653 lie on the Cytoplasmic side of the membrane; the sequence is KILLHVTRPN…SSTWKANGQP (161 aa). The 124-residue stretch at 520 to 643 folds into the STAS domain; that stretch reads RYREASRIPG…LTVGEAVADL (124 aa).

It belongs to the SLC26A/SulP transporter (TC 2.A.53) family.

Its subcellular location is the membrane. In terms of biological role, h(+)/sulfate cotransporter that may play a role in the regulation of sulfate assimilation. This Arabidopsis thaliana (Mouse-ear cress) protein is Probable sulfate transporter 3.4 (SULTR3;4).